A 675-amino-acid chain; its full sequence is TOM1-like protein 9 (675 aa).

The VHS domain occupies 9–138; sequence ATSEMLIGPD…ELLRAGAVFP (130 aa). Disordered regions lie at residues 144–181, 270–322, 371–524, 542–561, and 622–675; these read SAPV…EPEF, LPGT…QLAL, FSDN…YAQM, QNGV…GYQP, and RDQT…AGTM. A GAT domain is found at 180–268; sequence EFPTLSLSEI…VLTNYEAIAS (89 aa). 2 stretches are compositionally biased toward polar residues: residues 299–317 and 372–435; these read GDSS…NGVL and SDNT…GQGV. The segment covering 436–451 has biased composition (low complexity); the sequence is SSPWSSQPAQQPVQPS. Polar residues-rich tracts occupy residues 470–481 and 488–524; these read QDYSPSAESGSP and PTQT…YAQM. Positions 646–661 are enriched in basic and acidic residues; sequence NKPEDKLFGDLVDISK.

Belongs to the TOM1 family. In terms of assembly, interacts with ELC/VPS23A and ELCL/VPS23B. Ubiquitously expressed.

It is found in the cytoplasm. It localises to the membrane. In terms of biological role, might contribute to the loading of the ESCRT machinery. This chain is TOM1-like protein 9, found in Arabidopsis thaliana (Mouse-ear cress).